We begin with the raw amino-acid sequence, 356 residues long: MSTVTITDLARENVRNLTPYQSARRLGGNGDVWLNANEYPTAVEFQLTQQTLNRYPECQPKAVIENYAQYAGVKPEQVLVSRGADEGIELLIRAFCEPGKDAILYCPPTYGMYSVSAETIGVECRTVPTLENWQLDLQGISDKLDGVKVVYVCSPNNPTGQLINPQDFRTLLELTRGKAIVVADEAYIEFCPQASLVGWLAEYPHLAILRTLSKAFALAGLRCGFTLANEEVINLLMKVIAPYPLSTPVADIAAQALSPQGIVAMRERVAQIIAEREYLIAALKEIPCVEQVFDSETNYILARFKASSAVFKSLWDQGIILRDQNKQPSLSGCLRITVGTREESQRVIDALRAEQV.

Residue lysine 214 is modified to N6-(pyridoxal phosphate)lysine.

It belongs to the class-II pyridoxal-phosphate-dependent aminotransferase family. Histidinol-phosphate aminotransferase subfamily. In terms of assembly, homodimer. The cofactor is pyridoxal 5'-phosphate.

It carries out the reaction L-histidinol phosphate + 2-oxoglutarate = 3-(imidazol-4-yl)-2-oxopropyl phosphate + L-glutamate. It functions in the pathway amino-acid biosynthesis; L-histidine biosynthesis; L-histidine from 5-phospho-alpha-D-ribose 1-diphosphate: step 7/9. The polypeptide is Histidinol-phosphate aminotransferase (Escherichia coli O45:K1 (strain S88 / ExPEC)).